The chain runs to 413 residues: MKGSNTFRWAIAIGVVVAAAAFWFWHSRSESPTAAPGVAAQAPHTASAGRRGMRDGPLAPVQAATATTQAVPRYLSGLGTVTAANTVTVRSRVDGQLIALHFQEGQQVNAGDLLAQIDPSQFKVALAQAQGQLAKDNATLANARRDLARYQQLAKTNLVSRQELDAQQALVNETQGTIKADEANVASAQLQLDWSRITAPVSGRVGLKQVDVGNQISSSDTAGIVVITQTHPIDLIFTLPESDIATVVQAQKAGKALVVEAWDRTNSHKLSEGVLLSLDNQIDPTTGTIKIKARFTNQDDTLFPNQFVNARMLVDTEQNAVVVPAAAVQMGNEGHFVWVLNDENNVSKKRVKIGIQDNRNVVISAGLSAGDRVVTDGIDRLTEGAKVEVVEPQTTVADEKSPSRHEGQKGARA.

A signal peptide spans 1–20 (MKGSNTFRWAIAIGVVVAAA). Disordered stretches follow at residues 31-57 (SPTAAPGVAAQAPHTASAGRRGMRDGP) and 391-413 (EPQTTVADEKSPSRHEGQKGARA). A compositionally biased stretch (basic and acidic residues) spans 397-413 (ADEKSPSRHEGQKGARA).

The protein belongs to the membrane fusion protein (MFP) (TC 8.A.1) family. In terms of assembly, part of a tripartite efflux system composed of MdtA, MdtB and MdtC.

The protein resides in the cell inner membrane. The polypeptide is Multidrug resistance protein MdtA (Salmonella typhimurium (strain LT2 / SGSC1412 / ATCC 700720)).